A 104-amino-acid chain; its full sequence is Large ribosomal subunit protein eL31 (104 aa).

The protein belongs to the eukaryotic ribosomal protein eL31 family.

This chain is Large ribosomal subunit protein eL31 (rpl31e), found in Aeropyrum pernix (strain ATCC 700893 / DSM 11879 / JCM 9820 / NBRC 100138 / K1).